A 510-amino-acid chain; its full sequence is Glycerol kinase (510 aa).

Position 13 (T13) interacts with ADP. ATP contacts are provided by T13 and T14. T13 serves as a coordination point for sn-glycerol 3-phosphate. Residue R17 coordinates ADP. Sn-glycerol 3-phosphate-binding residues include R83, E84, Y135, and D255. Residues R83, E84, Y135, D255, and Q256 each coordinate glycerol. ADP-binding residues include T277, G321, G421, and N425. Residues T277, G321, and G421 each contribute to the ATP site.

This sequence belongs to the FGGY kinase family.

It carries out the reaction glycerol + ATP = sn-glycerol 3-phosphate + ADP + H(+). It functions in the pathway polyol metabolism; glycerol degradation via glycerol kinase pathway; sn-glycerol 3-phosphate from glycerol: step 1/1. Functionally, key enzyme in the regulation of glycerol uptake and metabolism. Catalyzes the phosphorylation of glycerol to yield sn-glycerol 3-phosphate. This is Glycerol kinase from Halobacterium salinarum (strain ATCC 29341 / DSM 671 / R1).